A 315-amino-acid polypeptide reads, in one-letter code: Protein MFI (315 aa).

In terms of assembly, can homodimerize. Interacts with MFF; the interaction inhibits MFF interaction with DNM1L. Enriched in the pancreatic beta cell and the testis and is expressed at low levels in other tissues tested.

It localises to the cytoplasm. The protein localises to the cytosol. It is found in the mitochondrion outer membrane. Acts as an inhibitor of mitochondrial fission. Interacts with MFF and prevents DNM1L recruitment to mitochondria, promoting a more fused mitochondrial network. The protein is Protein MFI of Mus musculus (Mouse).